A 200-amino-acid chain; its full sequence is Nucleoside triphosphate pyrophosphatase (200 aa).

D79 serves as the catalytic Proton acceptor.

The protein belongs to the Maf family. A divalent metal cation is required as a cofactor.

The protein localises to the cytoplasm. It catalyses the reaction a ribonucleoside 5'-triphosphate + H2O = a ribonucleoside 5'-phosphate + diphosphate + H(+). The catalysed reaction is a 2'-deoxyribonucleoside 5'-triphosphate + H2O = a 2'-deoxyribonucleoside 5'-phosphate + diphosphate + H(+). Functionally, nucleoside triphosphate pyrophosphatase. May have a dual role in cell division arrest and in preventing the incorporation of modified nucleotides into cellular nucleic acids. This Legionella pneumophila (strain Lens) protein is Nucleoside triphosphate pyrophosphatase.